Here is a 1418-residue protein sequence, read N- to C-terminus: Transcriptional regulator ADR1 (1418 aa).

2 stretches are compositionally biased toward low complexity: residues 34-44 (TTTTANMSNTT) and 68-93 (TSMS…TTTS). The tract at residues 34 to 96 (TTTTANMSNT…AATTTTSKKS (63 aa)) is disordered. 2 C2H2-type zinc fingers span residues 117–139 (FVCQ…ERSH) and 145–168 (FSCG…QKLH). Disordered stretches follow at residues 181–285 (KSIK…LDQR), 403–426 (SQHG…RSES), 454–484 (VAAH…GLSR), 1132–1167 (NSNS…NNSN), and 1338–1362 (TNTN…NQHH). A compositionally biased stretch (acidic residues) spans 189–211 (GDDDDDDDDDDEEMANSEDENDH). A compositionally biased stretch (polar residues) spans 236 to 278 (NLFNSKQKPTKANTTKSKVAKLSTTTSRKNSTNPTRKNSSSLH). Composition is skewed to low complexity over residues 462–477 (QQQQ…QPNQ), 1145–1167 (NEIN…NNSN), and 1338–1356 (TNTN…DNGT).

The protein localises to the nucleus. In terms of biological role, transcription factor involved in the regulation of hyphal growth. The chain is Transcriptional regulator ADR1 (ADR1) from Candida albicans (strain SC5314 / ATCC MYA-2876) (Yeast).